Here is a 162-residue protein sequence, read N- to C-terminus: Phosphopantetheine adenylyltransferase (162 aa).

T10 is a binding site for substrate. Residues 10–11 (TF) and H18 each bind ATP. Substrate-binding residues include K42, M74, and R88. ATP is bound by residues 89–91 (GLR), E99, and 124–130 (YAFLSST).

Belongs to the bacterial CoaD family. Homohexamer. Requires Mg(2+) as cofactor.

It localises to the cytoplasm. It carries out the reaction (R)-4'-phosphopantetheine + ATP + H(+) = 3'-dephospho-CoA + diphosphate. Its pathway is cofactor biosynthesis; coenzyme A biosynthesis; CoA from (R)-pantothenate: step 4/5. Reversibly transfers an adenylyl group from ATP to 4'-phosphopantetheine, yielding dephospho-CoA (dPCoA) and pyrophosphate. In Aliivibrio salmonicida (strain LFI1238) (Vibrio salmonicida (strain LFI1238)), this protein is Phosphopantetheine adenylyltransferase.